Reading from the N-terminus, the 171-residue chain is Peptide deformylase (171 aa).

Residues Cys91 and His133 each contribute to the Fe cation site. The active site involves Glu134. Residue His137 participates in Fe cation binding.

Belongs to the polypeptide deformylase family. Fe(2+) serves as cofactor.

It carries out the reaction N-terminal N-formyl-L-methionyl-[peptide] + H2O = N-terminal L-methionyl-[peptide] + formate. In terms of biological role, removes the formyl group from the N-terminal Met of newly synthesized proteins. Requires at least a dipeptide for an efficient rate of reaction. N-terminal L-methionine is a prerequisite for activity but the enzyme has broad specificity at other positions. The protein is Peptide deformylase of Edwardsiella ictaluri (strain 93-146).